The chain runs to 331 residues: Glyceraldehyde-3-phosphate dehydrogenase, cytosolic (331 aa).

Residues 11-12 (RI), aspartate 33, and arginine 77 contribute to the NAD(+) site. D-glyceraldehyde 3-phosphate contacts are provided by residues 148-150 (SCT), threonine 179, 208-209 (TG), and arginine 231. The active-site Nucleophile is the cysteine 149. NAD(+) is bound at residue asparagine 313.

The protein belongs to the glyceraldehyde-3-phosphate dehydrogenase family. Homotetramer.

Its subcellular location is the cytoplasm. It carries out the reaction D-glyceraldehyde 3-phosphate + phosphate + NAD(+) = (2R)-3-phospho-glyceroyl phosphate + NADH + H(+). Its pathway is carbohydrate degradation; glycolysis; pyruvate from D-glyceraldehyde 3-phosphate: step 1/5. This chain is Glyceraldehyde-3-phosphate dehydrogenase, cytosolic (GAPC), found in Leishmania mexicana.